The sequence spans 475 residues: NADH-quinone oxidoreductase subunit N 1 (475 aa).

Transmembrane regions (helical) follow at residues 8–28 (VMPL…EAAT), 36–56 (LFAI…PSEP), 67–87 (GGFF…ITLI), 100–120 (GEYY…SAAA), 122–142 (LTIL…LAGI), 157–177 (FLLG…IYGA), 199–219 (FLSG…AVPF), 244–264 (AAAL…LETF), 268–288 (PTAI…AALI), 295–315 (MFAY…ATGT), 322–342 (VLYY…IIIL), 366–386 (AFLM…GGFI), 403–423 (LAVA…RVVI), and 443–463 (ATIA…SLLI).

The protein belongs to the complex I subunit 2 family. NDH-1 is composed of 14 different subunits. Subunits NuoA, H, J, K, L, M, N constitute the membrane sector of the complex.

The protein localises to the cell inner membrane. The catalysed reaction is a quinone + NADH + 5 H(+)(in) = a quinol + NAD(+) + 4 H(+)(out). In terms of biological role, NDH-1 shuttles electrons from NADH, via FMN and iron-sulfur (Fe-S) centers, to quinones in the respiratory chain. The immediate electron acceptor for the enzyme in this species is believed to be a menaquinone. Couples the redox reaction to proton translocation (for every two electrons transferred, four hydrogen ions are translocated across the cytoplasmic membrane), and thus conserves the redox energy in a proton gradient. This chain is NADH-quinone oxidoreductase subunit N 1, found in Chloroherpeton thalassium (strain ATCC 35110 / GB-78).